Here is a 221-residue protein sequence, read N- to C-terminus: Transmembrane emp24 domain-containing protein 3 (221 aa).

An N-terminal signal peptide occupies residues 1 to 30 (MGNEVPRASSFQMLMLLLLLLLLRAERLRG). Over 31 to 184 (AELTFELPDN…RAEDLNSRVS (154 aa)) the chain is Lumenal. Residues 42–124 (KQCFHEEVEQ…HKTVYFDFQV (83 aa)) enclose the GOLD domain. Arginine 103 carries the dimethylated arginine modification. The helical transmembrane segment at 185–205 (YWSVGETIALFVVSFSQVLLL) threads the bilayer. The Cytoplasmic portion of the chain corresponds to 206 to 221 (KSFFTEKRPINRAVHS). The short motif at 208–209 (FF) is the COPII vesicle coat-binding element. Residues 208 to 221 (FFTEKRPINRAVHS) carry the COPI vesicle coat-binding motif.

The protein belongs to the EMP24/GP25L family. In terms of assembly, monomer in endoplasmic reticulum, endoplasmic reticulum-Golgi intermediate compartment and cis-Golgi network. Interacts (via C-terminus) with COPG1; the interaction involves dimeric TMED3; however, there are conflicting reports on the interaction. Interacts with GORASP1 and GORASP2.

It is found in the endoplasmic reticulum-Golgi intermediate compartment membrane. The protein resides in the golgi apparatus. The protein localises to the cis-Golgi network membrane. It localises to the golgi stack membrane. Its subcellular location is the endoplasmic reticulum membrane. It is found in the cytoplasmic vesicle. The protein resides in the COPI-coated vesicle membrane. In terms of biological role, potential role in vesicular protein trafficking, mainly in the early secretory pathway. Contributes to the coupled localization of TMED2 and TMED10 in the cis-Golgi network. The protein is Transmembrane emp24 domain-containing protein 3 (Tmed3) of Rattus norvegicus (Rat).